Here is a 314-residue protein sequence, read N- to C-terminus: uncharacterized protein (314 aa).

Positions 1–71 (MAGNSQRRGA…QRAGRKADET (71 aa)) are disordered. S-adenosyl-L-methionine is bound by residues glycine 266, isoleucine 286, and leucine 295.

Belongs to the class IV-like SAM-binding methyltransferase superfamily. RNA methyltransferase TrmH family.

This is an uncharacterized protein from Mycolicibacterium smegmatis (strain ATCC 700084 / mc(2)155) (Mycobacterium smegmatis).